A 353-amino-acid polypeptide reads, in one-letter code: Aliphatic aldoxime dehydratase (353 aa).

S219 is a binding site for an aliphatic aldoxime. H299 contacts heme b. Residue H320 participates in an aliphatic aldoxime binding. H320 is an active-site residue.

The protein belongs to the heme-containing dehydratase family. Homodimer. Heme b serves as cofactor.

The enzyme catalyses an aliphatic aldoxime = a nitrile + H2O. Active when the heme iron is in the ferrous state. The activity is enhanced by reducing agents, such as Na(2)S, Na(2)S(2)(O4), 2-mercaptoethanol, and L-cysteine and supplementary additions of electron acceptors such as flavins, sulfite ion, and vitamin K3. The effect of various chemicals on the enzyme activity is different in the presence and absence of the reducing reagent, Na(2)S, which acts not only as a reductant but also changes the substrate specificity of the enzyme. In terms of biological role, catalyzes the dehydration of aldoximes to their corresponding nitrile. Is active toward various arylalkyl- and alkyl-aldoximes, and to a lesser extent toward aryl-aldoximes. This Rhodococcus erythropolis (Arthrobacter picolinophilus) protein is Aliphatic aldoxime dehydratase.